Consider the following 872-residue polypeptide: Coatomer subunit gamma-2 (872 aa).

HEAT repeat units lie at residues 64–101 (MEAT…ISED), 283–320 (RELA…KHPS), 321–355 (AVTA…GSES), 356–392 (SVDR…KYPR), 395–430 (SVMM…ENPD), and 467–504 (PTPS…QNEP).

This sequence belongs to the COPG family. In terms of assembly, oligomeric complex.

It localises to the cytoplasm. It is found in the golgi apparatus membrane. Its subcellular location is the cytoplasmic vesicle. The protein resides in the COPI-coated vesicle membrane. Functionally, the coatomer is a cytosolic protein complex that binds to dilysine motifs and reversibly associates with Golgi non-clathrin-coated vesicles, which further mediate biosynthetic protein transport from the ER, via the Golgi up to the trans Golgi network. Coatomer complex is required for budding from Golgi membranes, and is essential for the retrograde Golgi-to-ER transport of dilysine-tagged proteins. In Xenopus tropicalis (Western clawed frog), this protein is Coatomer subunit gamma-2 (copg2).